The following is a 295-amino-acid chain: Protein FAM221A (295 aa).

Residues 244 to 295 (SEPPGIDKQVSSMRLSEEDDMAYFERRYQERLRKEKEHKRQKNSKPPTTQRP) form a disordered region. The segment covering 266 to 278 (YFERRYQERLRKE) has biased composition (basic and acidic residues).

The protein belongs to the FAM221 family.

The polypeptide is Protein FAM221A (fam221a) (Xenopus laevis (African clawed frog)).